The following is a 57-amino-acid chain: Potassium channel toxin gamma-KTx 2.1 (57 aa).

The signal sequence occupies residues 1-21 (MKISFVLLLTLFICSIGWSEA). Cystine bridges form between Cys-28–Cys-49, Cys-34–Cys-54, and Cys-38–Cys-56.

Belongs to the short scorpion toxin superfamily. Potassium channel inhibitor family. Gamma-KTx 2 subfamily. In terms of tissue distribution, expressed by the venom gland.

The protein resides in the secreted. Blocks human and/or rat Kv11.1/KCNH2/ERG1, Kv11.2/KCNH6/ERG2 and Kv11.3/KCNH7/ERG3 by binding to channel outer vestibule (S5P domain) with a 1:1 stoichiometry. Inhibition data are the following: hERG1 (reversible, Kd=7.7 nM, IC(50)=3.3 nM, IC(50)=11.9 nM), rERG1 (reversible, Kd=19 nM), hERG2 (reversible, Kd=77 nM), rERG2 (irreversible, Kd=4.2 nM), hERG3 (reversible, Kd=11.5 nM) and rERG3 (reversible, Kd=747 nM) potassium channels. Also has a minimal effect on rat ELK1/KCNH4 potassium channels (9% inhibition at 100 nM). Both this toxin and CnErgTx1 (AC Q86QT3) share mechanism of action and have overlapping binding sites on ERG1. The potency of these two toxins is not affected by elevating potassium ion concentration from 2 to 98 mM. In addition, at high toxin concentrations, block of ERG1 macroscopic currents by these two toxins is incomplete (88%). The blockade by this toxin is preferentially closed channel state-dependent, with a component of open, but not inactive state-dependent blockade. This toxin produces a concentration-dependent prolongation of QTc in the isolated rabbit heart (16.3% at 100 nM). The protein is Potassium channel toxin gamma-KTx 2.1 of Mesobuthus eupeus (Lesser Asian scorpion).